The chain runs to 272 residues: Tryptophan synthase alpha chain (272 aa).

Active-site proton acceptor residues include Glu49 and Asp60.

This sequence belongs to the TrpA family. In terms of assembly, tetramer of two alpha and two beta chains.

It carries out the reaction (1S,2R)-1-C-(indol-3-yl)glycerol 3-phosphate + L-serine = D-glyceraldehyde 3-phosphate + L-tryptophan + H2O. Its pathway is amino-acid biosynthesis; L-tryptophan biosynthesis; L-tryptophan from chorismate: step 5/5. Its function is as follows. The alpha subunit is responsible for the aldol cleavage of indoleglycerol phosphate to indole and glyceraldehyde 3-phosphate. The polypeptide is Tryptophan synthase alpha chain (Acidithiobacillus ferrooxidans (strain ATCC 23270 / DSM 14882 / CIP 104768 / NCIMB 8455) (Ferrobacillus ferrooxidans (strain ATCC 23270))).